A 209-amino-acid chain; its full sequence is Large ribosomal subunit protein bL25 (209 aa).

Belongs to the bacterial ribosomal protein bL25 family. CTC subfamily. In terms of assembly, part of the 50S ribosomal subunit; part of the 5S rRNA/L5/L18/L25 subcomplex. Contacts the 5S rRNA. Binds to the 5S rRNA independently of L5 and L18.

Functionally, this is one of the proteins that binds to the 5S RNA in the ribosome where it forms part of the central protuberance. The chain is Large ribosomal subunit protein bL25 from Xanthomonas campestris pv. campestris (strain B100).